Here is a 166-residue protein sequence, read N- to C-terminus: Ribosome maturation factor RimM (166 aa).

The region spanning 94 to 166 (EDEFYITDLN…AILNYKRDEL (73 aa)) is the PRC barrel domain.

Belongs to the RimM family. As to quaternary structure, binds ribosomal protein uS19.

The protein resides in the cytoplasm. Its function is as follows. An accessory protein needed during the final step in the assembly of 30S ribosomal subunit, possibly for assembly of the head region. Essential for efficient processing of 16S rRNA. May be needed both before and after RbfA during the maturation of 16S rRNA. It has affinity for free ribosomal 30S subunits but not for 70S ribosomes. The protein is Ribosome maturation factor RimM of Rickettsia bellii (strain RML369-C).